The chain runs to 224 residues: Zinc finger C4H2 domain-containing protein (224 aa).

The stretch at leucine 11–leucine 104 forms a coiled coil. The segment at cysteine 189–cysteine 206 adopts a C4H2-type zinc-finger fold.

In terms of tissue distribution, expressed in fetal tissues, including in brain, intestine, lung, kidney and muscle. Isoform 1 is expressed in numerous fetal brain regions. Isoform 3 is highly expressed in numerous fetal brain regions and spinal cord.

The protein resides in the cytoplasm. Its subcellular location is the nucleus. The protein localises to the postsynaptic cell membrane. In terms of biological role, plays a role in interneurons differentiation. Involved in neuronal development and in neuromuscular junction formation. The polypeptide is Zinc finger C4H2 domain-containing protein (ZC4H2) (Homo sapiens (Human)).